A 75-amino-acid chain; its full sequence is Cytochrome c oxidase assembly factor 5 (75 aa).

The 39-residue stretch at 28-66 (QHDCVVKEGKKPSECLKEGHCRSMQVAFFECKRSMLDTR) folds into the CHCH domain. The Cx10C motif signature appears at 31–42 (CVVKEGKKPSEC). 2 disulfide bridges follow: Cys-31–Cys-58 and Cys-42–Cys-48. The short motif at 48 to 58 (CRSMQVAFFEC) is the Cx9C motif element.

This sequence belongs to the PET191 family.

In terms of biological role, involved in an early step of the mitochondrial complex IV assembly process. The protein is Cytochrome c oxidase assembly factor 5 (coa5) of Danio rerio (Zebrafish).